The following is a 265-amino-acid chain: 4-hydroxy-tetrahydrodipicolinate reductase (265 aa).

9–14 (GPRGRM) serves as a coordination point for NAD(+). Arginine 37 serves as a coordination point for NADP(+). NAD(+) contacts are provided by residues 98 to 100 (GTT) and 124 to 127 (APNF). The active-site Proton donor/acceptor is histidine 154. Histidine 155 lines the (S)-2,3,4,5-tetrahydrodipicolinate pocket. Lysine 158 serves as the catalytic Proton donor. 164–165 (GT) is a binding site for (S)-2,3,4,5-tetrahydrodipicolinate.

It belongs to the DapB family.

The protein resides in the cytoplasm. The catalysed reaction is (S)-2,3,4,5-tetrahydrodipicolinate + NAD(+) + H2O = (2S,4S)-4-hydroxy-2,3,4,5-tetrahydrodipicolinate + NADH + H(+). It carries out the reaction (S)-2,3,4,5-tetrahydrodipicolinate + NADP(+) + H2O = (2S,4S)-4-hydroxy-2,3,4,5-tetrahydrodipicolinate + NADPH + H(+). It functions in the pathway amino-acid biosynthesis; L-lysine biosynthesis via DAP pathway; (S)-tetrahydrodipicolinate from L-aspartate: step 4/4. Its function is as follows. Catalyzes the conversion of 4-hydroxy-tetrahydrodipicolinate (HTPA) to tetrahydrodipicolinate. This chain is 4-hydroxy-tetrahydrodipicolinate reductase, found in Geobacillus thermodenitrificans (strain NG80-2).